Consider the following 263-residue polypeptide: Oxygen-evolving enhancer protein 2, chloroplastic (263 aa).

The N-terminal 78 residues, 1 to 78 (MAAASCFHAL…VGTKVSPADA (78 aa)), are a transit peptide targeting the chloroplast. Residues 14-30 (ARSSSSSLQSSSSRLPA) show a composition bias toward low complexity. Residues 14–34 (ARSSSSSLQSSSSRLPAPIKP) are disordered.

The protein belongs to the PsbP family.

The protein localises to the plastid. Its subcellular location is the chloroplast thylakoid membrane. May be involved in the regulation of photosystem II. This is Oxygen-evolving enhancer protein 2, chloroplastic from Helianthus annuus (Common sunflower).